A 210-amino-acid chain; its full sequence is Uracil phosphoribosyltransferase (210 aa).

Residues arginine 78, arginine 103, and 130–138 (DPMLATGGS) contribute to the 5-phospho-alpha-D-ribose 1-diphosphate site. Uracil is bound by residues isoleucine 193 and 198-200 (GDA). Aspartate 199 provides a ligand contact to 5-phospho-alpha-D-ribose 1-diphosphate.

The protein belongs to the UPRTase family. The cofactor is Mg(2+).

The enzyme catalyses UMP + diphosphate = 5-phospho-alpha-D-ribose 1-diphosphate + uracil. The protein operates within pyrimidine metabolism; UMP biosynthesis via salvage pathway; UMP from uracil: step 1/1. Its activity is regulated as follows. Allosterically activated by GTP. Its function is as follows. Catalyzes the conversion of uracil and 5-phospho-alpha-D-ribose 1-diphosphate (PRPP) to UMP and diphosphate. The sequence is that of Uracil phosphoribosyltransferase from Chromobacterium violaceum (strain ATCC 12472 / DSM 30191 / JCM 1249 / CCUG 213 / NBRC 12614 / NCIMB 9131 / NCTC 9757 / MK).